We begin with the raw amino-acid sequence, 463 residues long: Histone acetyltransferase mst1 (463 aa).

Residues 22–74 enclose the Tudor-knot domain; it reads VYKSKVFAFKDGEYRKAEILMIQKRTRGVVYYVHYNDYNKRLDEWITIDNIDL. A disordered region spans residues 76-145; it reads KGIEYPPPEK…GSNAGNESLP (70 aa). Residues 87 to 99 are compositionally biased toward basic residues; it reads KKAHGKGKSSKRP. Residues 111-121 show a composition bias toward low complexity; sequence PSKTEPSTPST. The region spanning 179–451 is the MYST-type HAT domain; the sequence is ARIRNINKIC…NGDLLADWQP (273 aa). The C2HC MYST-type zinc-finger motif lies at 212-237; that stretch reads VYICSFCFCYYGSERQFQRHREKCTL. Residues 262–283 carry the ESA1-RPD3 motif motif; that stretch reads RTWCRNICLLSKLFLDHKMLYY. Lysine 279 carries the post-translational modification N6-acetyllysine; by autocatalysis. Acetyl-CoA-binding positions include 320–324 and 329–335; these read ACILT and QRHGYGK. Glutamate 355 functions as the Proton donor/acceptor in the catalytic mechanism. Residue serine 359 participates in acetyl-CoA binding.

The protein belongs to the MYST (SAS/MOZ) family. Component of the NuA4 histone acetyltransferase complex. Interacts with arp4. Post-translationally, autoacetylation at Lys-279 is required for proper function.

The protein resides in the nucleus. It is found in the chromosome. It catalyses the reaction L-lysyl-[histone] + acetyl-CoA = N(6)-acetyl-L-lysyl-[histone] + CoA + H(+). The enzyme catalyses L-lysyl-[protein] + acetyl-CoA = N(6)-acetyl-L-lysyl-[protein] + CoA + H(+). The catalysed reaction is 2-hydroxyisobutanoyl-CoA + L-lysyl-[protein] = N(6)-(2-hydroxyisobutanoyl)-L-lysyl-[protein] + CoA + H(+). It carries out the reaction (2E)-butenoyl-CoA + L-lysyl-[protein] = N(6)-(2E)-butenoyl-L-lysyl-[protein] + CoA + H(+). Catalytic component of the NuA4 histone acetyltransferase (HAT) complex which is involved in epigenetic transcriptional activation of selected genes principally by acetylation of nucleosomal histones H4, H3, H2B, H2A and H2A variant H2A.Z. Acetylates histone H4 to form H4K5ac, H4K8ac, H4K12ac and H4K16ac, histone H3 to form H3K14ac, and histone H2A to form H2AK4ac and H2AK7ac. The NuA4 complex is involved in the DNA damage response and is required for chromosome segregation. The NuA4 complex plays a direct role in repair of DNA double-strand breaks (DSBs) through homologous recombination. Recruitment to promoters depends on H3K4me. Also acetylates non-histone proteins. In addition to protein acetyltransferase, can use different acyl-CoA substrates, such as 2-hydroxyisobutanoyl-CoA (2-hydroxyisobutyryl-CoA) or (2E)-butenoyl-CoA (crotonyl-CoA), and is able to mediate protein 2-hydroxyisobutyrylation and crotonylation, respectively. In Schizosaccharomyces pombe (strain 972 / ATCC 24843) (Fission yeast), this protein is Histone acetyltransferase mst1.